We begin with the raw amino-acid sequence, 258 residues long: Imidazole glycerol phosphate synthase subunit HisF (258 aa).

Catalysis depends on residues aspartate 11 and aspartate 130.

It belongs to the HisA/HisF family. In terms of assembly, heterodimer of HisH and HisF.

It is found in the cytoplasm. It catalyses the reaction 5-[(5-phospho-1-deoxy-D-ribulos-1-ylimino)methylamino]-1-(5-phospho-beta-D-ribosyl)imidazole-4-carboxamide + L-glutamine = D-erythro-1-(imidazol-4-yl)glycerol 3-phosphate + 5-amino-1-(5-phospho-beta-D-ribosyl)imidazole-4-carboxamide + L-glutamate + H(+). It functions in the pathway amino-acid biosynthesis; L-histidine biosynthesis; L-histidine from 5-phospho-alpha-D-ribose 1-diphosphate: step 5/9. Functionally, IGPS catalyzes the conversion of PRFAR and glutamine to IGP, AICAR and glutamate. The HisF subunit catalyzes the cyclization activity that produces IGP and AICAR from PRFAR using the ammonia provided by the HisH subunit. The sequence is that of Imidazole glycerol phosphate synthase subunit HisF from Methylorubrum extorquens (strain PA1) (Methylobacterium extorquens).